The chain runs to 33 residues: Pardaxin P-4 (33 aa).

It belongs to the pardaxin family. Monomer. In aqueous solution exists as a tetramer.

It localises to the secreted. Its subcellular location is the target cell membrane. In terms of biological role, exhibits unusual shark repellent and surfactant properties. Forms voltage-dependent, ion-permeable channels in membranes. At high concentration causes cell membrane lysis. This Pardachirus marmoratus (Finless sole) protein is Pardaxin P-4.